We begin with the raw amino-acid sequence, 166 residues long: NAD(P)H-quinone oxidoreductase subunit I, chloroplastic (166 aa).

4Fe-4S ferredoxin-type domains follow at residues 55–84 (GRIH…VDWK) and 95–124 (LNYS…MTEE). Cys-64, Cys-67, Cys-70, Cys-74, Cys-104, Cys-107, Cys-110, and Cys-114 together coordinate [4Fe-4S] cluster.

Belongs to the complex I 23 kDa subunit family. In terms of assembly, NDH is composed of at least 16 different subunits, 5 of which are encoded in the nucleus. The cofactor is [4Fe-4S] cluster.

Its subcellular location is the plastid. The protein resides in the chloroplast thylakoid membrane. It carries out the reaction a plastoquinone + NADH + (n+1) H(+)(in) = a plastoquinol + NAD(+) + n H(+)(out). The catalysed reaction is a plastoquinone + NADPH + (n+1) H(+)(in) = a plastoquinol + NADP(+) + n H(+)(out). Its function is as follows. NDH shuttles electrons from NAD(P)H:plastoquinone, via FMN and iron-sulfur (Fe-S) centers, to quinones in the photosynthetic chain and possibly in a chloroplast respiratory chain. The immediate electron acceptor for the enzyme in this species is believed to be plastoquinone. Couples the redox reaction to proton translocation, and thus conserves the redox energy in a proton gradient. The protein is NAD(P)H-quinone oxidoreductase subunit I, chloroplastic of Chaenactis santolinoides (Santolina pincushion).